Here is a 510-residue protein sequence, read N- to C-terminus: Histidine ammonia-lyase (510 aa).

The segment at residues Ala-143 to Gly-145 is a cross-link (5-imidazolinone (Ala-Gly)). 2,3-didehydroalanine (Ser) is present on Ser-144.

Belongs to the PAL/histidase family. In terms of processing, contains an active site 4-methylidene-imidazol-5-one (MIO), which is formed autocatalytically by cyclization and dehydration of residues Ala-Ser-Gly.

It localises to the cytoplasm. The catalysed reaction is L-histidine = trans-urocanate + NH4(+). Its pathway is amino-acid degradation; L-histidine degradation into L-glutamate; N-formimidoyl-L-glutamate from L-histidine: step 1/3. The sequence is that of Histidine ammonia-lyase from Yersinia pestis.